The chain runs to 92 residues: N(2)-fixation sustaining protein CowN (92 aa).

This sequence belongs to the CowN family.

Functionally, is required to sustain N(2)-dependent growth in the presence of low levels of carbon monoxide (CO). Probably acts by protecting the N(2) fixation ability of the nitrogenase complex, which is inactivated in the presence of CO. This is N(2)-fixation sustaining protein CowN from Rhodopseudomonas palustris (strain BisA53).